Here is a 317-residue protein sequence, read N- to C-terminus: Tenomodulin (317 aa).

At 1-30 the chain is on the cytoplasmic side; sequence MAKNPPENCEGCHILNAEALKSKKIRKSLK. A helical; Signal-anchor for type II membrane protein membrane pass occupies residues 31 to 50; it reads ICGLVFGILALTLIVLFWGS. Over 51–317 the chain is Extracellular; the sequence is KHFWPEVSKK…WWVARMLGRV (267 aa). One can recognise a BRICHOS domain in the interval 93–186; the sequence is GNGTDETLEV…ICDNVTMYWI (94 aa). N-linked (GlcNAc...) asparagine glycosylation occurs at asparagine 94. Cysteine 120 and cysteine 178 are disulfide-bonded. Residue asparagine 180 is glycosylated (N-linked (GlcNAc...) asparagine). Serine 239 is subject to Phosphoserine.

It belongs to the chondromodulin-1 family. As to expression, highly expressed in tendons.

Its subcellular location is the membrane. It is found in the nucleus envelope. In terms of biological role, may be an angiogenesis inhibitor. The chain is Tenomodulin (Tnmd) from Rattus norvegicus (Rat).